A 238-amino-acid chain; its full sequence is Probable solute-binding protein AdeT2 (238 aa).

Belongs to the bacterial solute-binding protein 7 family.

In terms of biological role, mediates antimicrobial resistance via active efflux. Contributes to resistance to antibiotics such as chloramphenicol, erythromycin and novobiocin. May be part of a tripartite ATP-independent periplasmic (TRAP) transport system. This Acinetobacter baumannii protein is Probable solute-binding protein AdeT2.